Here is a 239-residue protein sequence, read N- to C-terminus: MTLTRKTLFLLTAAFGIHSFQTASADAVVRAEKLHASANRSYKVAGKRYTPKNQVAEFTQTGNASWYGGRFHGRKTSGGERYDMNAFTAAHKTLPIPSYVRVTNTKNGKSVIVRVNDRGPFHGNRIIDVSKAAAQKLGFVNQGTAHVKIEQIVPGQSAPVAENKDIFIDLKSFGTEHEAQAYLNQAAQNLASSASNPNLSVEKRRYEYVVKMGPFASQERAAEAEAQARGMVRAVLTAG.

Positions 1-25 (MTLTRKTLFLLTAAFGIHSFQTASA) are cleaved as a signal peptide. The SPOR domain occupies 160-239 (VAENKDIFID…GMVRAVLTAG (80 aa)).

Belongs to the RlpA family.

Lytic transglycosylase with a strong preference for naked glycan strands that lack stem peptides. The sequence is that of Endolytic peptidoglycan transglycosylase RlpA from Neisseria meningitidis serogroup A / serotype 4A (strain DSM 15465 / Z2491).